A 121-amino-acid polypeptide reads, in one-letter code: Large ribosomal subunit protein bL20 (121 aa).

The protein belongs to the bacterial ribosomal protein bL20 family.

Binds directly to 23S ribosomal RNA and is necessary for the in vitro assembly process of the 50S ribosomal subunit. It is not involved in the protein synthesizing functions of that subunit. The polypeptide is Large ribosomal subunit protein bL20 (Ruegeria pomeroyi (strain ATCC 700808 / DSM 15171 / DSS-3) (Silicibacter pomeroyi)).